Here is a 205-residue protein sequence, read N- to C-terminus: Guanylate kinase (205 aa).

Positions 19–197 (PKLFTISAPA…AYRVLKSIFI (179 aa)) constitute a Guanylate kinase-like domain. Residue 26-33 (APAGVGKT) participates in ATP binding.

This sequence belongs to the guanylate kinase family.

Its subcellular location is the cytoplasm. It catalyses the reaction GMP + ATP = GDP + ADP. In terms of biological role, essential for recycling GMP and indirectly, cGMP. In Chlamydia pneumoniae (Chlamydophila pneumoniae), this protein is Guanylate kinase (gmk).